We begin with the raw amino-acid sequence, 420 residues long: Histidine--tRNA ligase (420 aa).

Belongs to the class-II aminoacyl-tRNA synthetase family. Homodimer.

It is found in the cytoplasm. The catalysed reaction is tRNA(His) + L-histidine + ATP = L-histidyl-tRNA(His) + AMP + diphosphate + H(+). This chain is Histidine--tRNA ligase, found in Staphylococcus aureus (strain Mu3 / ATCC 700698).